The following is a 552-amino-acid chain: Mothers against decapentaplegic homolog 4 (552 aa).

A mediates interaction with ZBTB7A region spans residues 1-322 (MDNMSITNTP…PISNHPAPEY (322 aa)). One can recognise an MH1 domain in the interval 18-142 (SIVHSLMCHR…YERVVSPGID (125 aa)). Lys-37 is subject to N6-acetyllysine. Residues 44-69 (VKKLKEKKDELDSLITAITTNGAHPS) form a required for interaction with TSC22D1 region. Cys-71 contacts Zn(2+). A Glycyl lysine isopeptide (Lys-Gly) (interchain with G-Cter in SUMO2) cross-link involves residue Lys-113. Residues Cys-115, Cys-127, and His-132 each coordinate Zn(2+). Disordered regions lie at residues 168-194 (GQPSLSTEGHSIQTIQHPPSNRASTET) and 236-256 (GLLQIASGPQPGQQQNGFTGQ). Polar residues-rich tracts occupy residues 170–194 (PSLSTEGHSIQTIQHPPSNRASTET) and 245–256 (QPGQQQNGFTGQ). The interval 275-320 (PYTPNLPHHQNGHLQHHPPMPPHPGHYWPVHNELAFQPPISNHPAP) is SAD. The MH2 domain occupies 323 to 552 (WCSIAYFEMD…MPIADPQPLD (230 aa)). N6-acetyllysine occurs at positions 428 and 507. Lys-519 is covalently cross-linked (Glycyl lysine isopeptide (Lys-Gly) (interchain with G-Cter in ubiquitin)).

The protein belongs to the dwarfin/SMAD family. As to quaternary structure, monomer; in the absence of TGF-beta activation. Heterotrimer; on TGF-beta activation. Heterotrimer composed of two molecules of a C-terminally phosphorylated R-SMAD molecule, SMAD2 or SMAD3, and one molecule of SMAD4 to form the transcriptional active SMAD2/SMAD3-SMAD4 complex. Found in a ternary complex composed of SMAD4, STK11/LKB1 and STK11IP. Found in a complex with SMAD1 and YY1. Identified in a complex that contains at least ZNF451, SMAD2, SMAD3 and SMAD4. Interacts with ATF2, COPS5, DACH1, MSG1, SKI, STK11/LKB1, STK11IP and TRIM33. Associates with ZNF423 or ZNF521 in response to BMP2 leading to activate transcription of BMP target genes. Interacts with USP9X. Interacts (via the MH1 and MH2 domains) with RBPMS. Interacts with WWTR1 (via coiled-coil domain). Interacts with CITED1 and CITED2. Interacts with PDPK1 (via PH domain). Interacts with VPS39; this interaction affects heterodimer formation with SMAD3, but not with SMAD2, and leads to inhibition of SMAD3-dependent transcription activation. Interactions with VPS39 and SMAD2 may be mutually exclusive. Interacts (via MH2 domain) with ZNF451 (via N-terminal zinc-finger domains). Interacts with ZC3H3. Interacts weakly with ZNF8. Interacts with NUP93 and IPO7; translocates SMAD4 to the nucleus through the NPC upon BMP7 stimulation resulting in activation of SMAD4 signaling. Interacts with CREB3L1, the interaction takes place upon TGFB1 induction and SMAD4 acts as a CREB3L1 coactivator to induce the expression of genes involved in the assembly of collagen extracellular matrix. Interacts with DLX1. Interacts with ZBTB7A; the interaction is direct and stimulated by TGFB1. Interacts with CREBBP; the recruitment of this transcriptional coactivator is negatively regulated by ZBTB7A. Interacts with EP300; the interaction with this transcriptional coactivator is negatively regulated by ZBTB7A. Interacts with HDAC1. Interacts (via MH2 domain) with ZMIZ1 (via SP-RING-type domain); in the TGF-beta signaling pathway increases the activity of the SMAD3/SMAD4 transcriptional complex. Interacts (via N-terminus) with TSC22D1. In terms of processing, phosphorylated by PDPK1. Post-translationally, monoubiquitinated on Lys-519 by E3 ubiquitin-protein ligase TRIM33. Monoubiquitination hampers its ability to form a stable complex with activated SMAD2/3 resulting in inhibition of TGF-beta/BMP signaling cascade. Deubiquitination by USP9X restores its competence to mediate TGF-beta signaling.

It is found in the cytoplasm. The protein resides in the nucleus. In terms of biological role, in muscle physiology, plays a central role in the balance between atrophy and hypertrophy. When recruited by MSTN, promotes atrophy response via phosphorylated SMAD2/4. MSTN decrease causes SMAD4 release and subsequent recruitment by the BMP pathway to promote hypertrophy via phosphorylated SMAD1/5/8. Acts synergistically with SMAD1 and YY1 in bone morphogenetic protein (BMP)-mediated cardiac-specific gene expression. Binds to SMAD binding elements (SBEs) (5'-GTCT/AGAC-3') within BMP response element (BMPRE) of cardiac activating regions. Common SMAD (co-SMAD) is the coactivator and mediator of signal transduction by TGF-beta (transforming growth factor). Component of the heterotrimeric SMAD2/SMAD3-SMAD4 complex that forms in the nucleus and is required for the TGF-mediated signaling. Promotes binding of the SMAD2/SMAD4/FAST-1 complex to DNA and provides an activation function required for SMAD1 or SMAD2 to stimulate transcription. Component of the multimeric SMAD3/SMAD4/JUN/FOS complex which forms at the AP1 promoter site; required for synergistic transcriptional activity in response to TGF-beta. May act as a tumor suppressor. Positively regulates PDPK1 kinase activity by stimulating its dissociation from the 14-3-3 protein YWHAQ which acts as a negative regulator. The chain is Mothers against decapentaplegic homolog 4 (SMAD4) from Homo sapiens (Human).